Here is a 186-residue protein sequence, read N- to C-terminus: MSVADTKKSVEQKMQKSIEAFKADLAKIRTGRAHTGLLDHVQVDYYGSMVPISQVAAVGLADARTITVQPWEKKMVGAVEKAIRDCDLGLNPATMGEVIRVPMPALTEERRKELTKVVKGEAEGAKVAVRNLRRDANEQFKKLVKDKTISEDDERRGQDEVQKLTDKYVAEIDKMVAEKEKEIMTV.

Belongs to the RRF family.

It localises to the cytoplasm. In terms of biological role, responsible for the release of ribosomes from messenger RNA at the termination of protein biosynthesis. May increase the efficiency of translation by recycling ribosomes from one round of translation to another. The protein is Ribosome-recycling factor of Cupriavidus necator (strain ATCC 17699 / DSM 428 / KCTC 22496 / NCIMB 10442 / H16 / Stanier 337) (Ralstonia eutropha).